The primary structure comprises 64 residues: Large ribosomal subunit protein uL30 (64 aa).

This sequence belongs to the universal ribosomal protein uL30 family. In terms of assembly, part of the 50S ribosomal subunit.

The chain is Large ribosomal subunit protein uL30 from Desulforudis audaxviator (strain MP104C).